The chain runs to 667 residues: Sorting nexin mvp1 (667 aa).

Residues 221 to 268 form a disordered region; sequence AGNLHSQQPPKFSVDSSVDDNAITPRKPFSKIPNRLSPSTQPLLSNSR. The span at 224 to 236 shows a compositional bias: polar residues; that stretch reads LHSQQPPKFSVDS. In terms of domain architecture, PX spans 279-398; sequence TSFPASLEMN…RVFFTEPNVF (120 aa). Residues arginine 320, serine 322, and lysine 346 each contribute to the a 1,2-diacyl-sn-glycero-3-phospho-(1D-myo-inositol-3-phosphate) site. The disordered stretch occupies residues 574–594; sequence ANSDESGRNRTFLNRSSKKRA.

The protein belongs to the sorting nexin family. Homodimer. Forms an autoinhibited tetramer consisting of 2 homodimers that self-interact, wherein the membrane-interacting BAR surfaces are sequestered and the PX lipid-binding sites are occluded. Interacts with Vps1.

The protein localises to the cytoplasm. It localises to the endosome membrane. Required for vacuolar protein sorting. Component of the retromer-mediated endosome-to-Golgi retrograde pathway. Required for efficient cargo export from the endosome, promoting Vps1-mediated fission of retromer-coated tubules that bud from the endosome. The sequence is that of Sorting nexin mvp1 (mvp1) from Schizosaccharomyces pombe (strain 972 / ATCC 24843) (Fission yeast).